Consider the following 267-residue polypeptide: Sulfur carrier protein FdhD (267 aa).

Residue Cys108 is the Cysteine persulfide intermediate of the active site.

This sequence belongs to the FdhD family.

The protein localises to the cytoplasm. In terms of biological role, required for formate dehydrogenase (FDH) activity. Acts as a sulfur carrier protein that transfers sulfur from IscS to the molybdenum cofactor prior to its insertion into FDH. The sequence is that of Sulfur carrier protein FdhD from Shouchella clausii (strain KSM-K16) (Alkalihalobacillus clausii).